A 206-amino-acid chain; its full sequence is Dephospho-CoA kinase (206 aa).

Residues 4–204 enclose the DPCK domain; that stretch reads IVGLTGGIGS…QFYLQQAENK (201 aa). 12–17 contacts ATP; that stretch reads GSGKTT.

This sequence belongs to the CoaE family.

The protein resides in the cytoplasm. The enzyme catalyses 3'-dephospho-CoA + ATP = ADP + CoA + H(+). It participates in cofactor biosynthesis; coenzyme A biosynthesis; CoA from (R)-pantothenate: step 5/5. Catalyzes the phosphorylation of the 3'-hydroxyl group of dephosphocoenzyme A to form coenzyme A. This is Dephospho-CoA kinase from Haemophilus influenzae (strain 86-028NP).